We begin with the raw amino-acid sequence, 882 residues long: Alanine--tRNA ligase (882 aa).

His-567, His-571, Cys-669, and His-673 together coordinate Zn(2+).

This sequence belongs to the class-II aminoacyl-tRNA synthetase family. Zn(2+) is required as a cofactor.

Its subcellular location is the cytoplasm. It catalyses the reaction tRNA(Ala) + L-alanine + ATP = L-alanyl-tRNA(Ala) + AMP + diphosphate. In terms of biological role, catalyzes the attachment of alanine to tRNA(Ala) in a two-step reaction: alanine is first activated by ATP to form Ala-AMP and then transferred to the acceptor end of tRNA(Ala). Also edits incorrectly charged Ser-tRNA(Ala) and Gly-tRNA(Ala) via its editing domain. The chain is Alanine--tRNA ligase from Thermosynechococcus vestitus (strain NIES-2133 / IAM M-273 / BP-1).